We begin with the raw amino-acid sequence, 117 residues long: Photosystem II reaction center Psb28 protein (117 aa).

It belongs to the Psb28 family. In terms of assembly, part of the photosystem II complex.

The protein localises to the cellular thylakoid membrane. This Prochlorococcus marinus subsp. pastoris (strain CCMP1986 / NIES-2087 / MED4) protein is Photosystem II reaction center Psb28 protein.